A 698-amino-acid chain; its full sequence is Elongation factor G (698 aa).

A tr-type G domain is found at 10 to 285; sequence AATRNIGIMA…AVVDFLPSPT (276 aa). GTP-binding positions include 19-26, 83-87, and 137-140; these read AHIDAGKT, DTPGH, and NKMD.

The protein belongs to the TRAFAC class translation factor GTPase superfamily. Classic translation factor GTPase family. EF-G/EF-2 subfamily.

The protein resides in the cytoplasm. Its function is as follows. Catalyzes the GTP-dependent ribosomal translocation step during translation elongation. During this step, the ribosome changes from the pre-translocational (PRE) to the post-translocational (POST) state as the newly formed A-site-bound peptidyl-tRNA and P-site-bound deacylated tRNA move to the P and E sites, respectively. Catalyzes the coordinated movement of the two tRNA molecules, the mRNA and conformational changes in the ribosome. This chain is Elongation factor G, found in Parafrankia sp. (strain EAN1pec).